The following is a 110-amino-acid chain: Large ribosomal subunit protein uL22 (110 aa).

It belongs to the universal ribosomal protein uL22 family. In terms of assembly, part of the 50S ribosomal subunit.

This protein binds specifically to 23S rRNA; its binding is stimulated by other ribosomal proteins, e.g. L4, L17, and L20. It is important during the early stages of 50S assembly. It makes multiple contacts with different domains of the 23S rRNA in the assembled 50S subunit and ribosome. In terms of biological role, the globular domain of the protein is located near the polypeptide exit tunnel on the outside of the subunit, while an extended beta-hairpin is found that lines the wall of the exit tunnel in the center of the 70S ribosome. This Buchnera aphidicola subsp. Acyrthosiphon pisum (strain 5A) protein is Large ribosomal subunit protein uL22.